The sequence spans 210 residues: Na(+)-translocating NADH-quinone reductase subunit D (210 aa).

6 helical membrane passes run 14–34 (PIISNNPIALQILGVCSALAV), 42–62 (LVMTIALTAVTALSNLFISMI), 72–92 (IIVQMTIIASLVIVVDQVLQA), 103–123 (VFVGLIITNCIVMGRAEAYAM), 131–151 (FMDGIGNGLGYGAILLSVGFV), and 178–198 (NGLLLLPPSAFFLIASLIWII).

Belongs to the NqrDE/RnfAE family. As to quaternary structure, composed of six subunits; NqrA, NqrB, NqrC, NqrD, NqrE and NqrF.

Its subcellular location is the cell inner membrane. It catalyses the reaction a ubiquinone + n Na(+)(in) + NADH + H(+) = a ubiquinol + n Na(+)(out) + NAD(+). NQR complex catalyzes the reduction of ubiquinone-1 to ubiquinol by two successive reactions, coupled with the transport of Na(+) ions from the cytoplasm to the periplasm. NqrA to NqrE are probably involved in the second step, the conversion of ubisemiquinone to ubiquinol. This Shewanella loihica (strain ATCC BAA-1088 / PV-4) protein is Na(+)-translocating NADH-quinone reductase subunit D.